Consider the following 640-residue polypeptide: Threonine--tRNA ligase (640 aa).

Positions 1–61 (MPVITLPDGS…SNDATLQIIT (61 aa)) constitute a TGS domain. Positions 242–533 (DHRKIGKQLD…LIEHYAGVFP (292 aa)) are catalytic. The Zn(2+) site is built by cysteine 333, histidine 384, and histidine 510.

It belongs to the class-II aminoacyl-tRNA synthetase family. As to quaternary structure, homodimer. The cofactor is Zn(2+).

It localises to the cytoplasm. The catalysed reaction is tRNA(Thr) + L-threonine + ATP = L-threonyl-tRNA(Thr) + AMP + diphosphate + H(+). In terms of biological role, catalyzes the attachment of threonine to tRNA(Thr) in a two-step reaction: L-threonine is first activated by ATP to form Thr-AMP and then transferred to the acceptor end of tRNA(Thr). Also edits incorrectly charged L-seryl-tRNA(Thr). In Pseudomonas putida (strain ATCC 47054 / DSM 6125 / CFBP 8728 / NCIMB 11950 / KT2440), this protein is Threonine--tRNA ligase.